The primary structure comprises 691 residues: Elongation factor G (691 aa).

Residues 8 to 282 (EKTRNIGIMA…AVVDYLPSPV (275 aa)) form the tr-type G domain. GTP contacts are provided by residues 17 to 24 (AHIDAGKT), 81 to 85 (DTPGH), and 135 to 138 (NKMD).

The protein belongs to the TRAFAC class translation factor GTPase superfamily. Classic translation factor GTPase family. EF-G/EF-2 subfamily.

It localises to the cytoplasm. Catalyzes the GTP-dependent ribosomal translocation step during translation elongation. During this step, the ribosome changes from the pre-translocational (PRE) to the post-translocational (POST) state as the newly formed A-site-bound peptidyl-tRNA and P-site-bound deacylated tRNA move to the P and E sites, respectively. Catalyzes the coordinated movement of the two tRNA molecules, the mRNA and conformational changes in the ribosome. This is Elongation factor G from Caldicellulosiruptor bescii (strain ATCC BAA-1888 / DSM 6725 / KCTC 15123 / Z-1320) (Anaerocellum thermophilum).